Here is a 131-residue protein sequence, read N- to C-terminus: uncharacterized protein (131 aa).

2 consecutive transmembrane segments (helical) span residues 61-81 (LLLL…YLPI) and 102-122 (VCSI…ALRY).

The protein localises to the membrane. This is an uncharacterized protein from Saccharomyces cerevisiae (strain ATCC 204508 / S288c) (Baker's yeast).